Consider the following 106-residue polypeptide: Large ribosomal subunit protein uL24 (106 aa).

It belongs to the universal ribosomal protein uL24 family. Part of the 50S ribosomal subunit.

Functionally, one of two assembly initiator proteins, it binds directly to the 5'-end of the 23S rRNA, where it nucleates assembly of the 50S subunit. One of the proteins that surrounds the polypeptide exit tunnel on the outside of the subunit. This chain is Large ribosomal subunit protein uL24, found in Azobacteroides pseudotrichonymphae genomovar. CFP2.